We begin with the raw amino-acid sequence, 169 residues long: Endoribonuclease YbeY (169 aa).

Zn(2+) is bound by residues H117, H121, and H127.

This sequence belongs to the endoribonuclease YbeY family. Zn(2+) serves as cofactor.

The protein localises to the cytoplasm. In terms of biological role, single strand-specific metallo-endoribonuclease involved in late-stage 70S ribosome quality control and in maturation of the 3' terminus of the 16S rRNA. This chain is Endoribonuclease YbeY, found in Mesoplasma florum (strain ATCC 33453 / NBRC 100688 / NCTC 11704 / L1) (Acholeplasma florum).